The following is a 580-amino-acid chain: Purine permease (580 aa).

12 helical membrane-spanning segments follow: residues 68–88 (PLVL…AGVI), 107–127 (SQYL…VQMF), 136–156 (YYVG…ITVA), 184–204 (YGAL…LSFM), 211–231 (ALFP…SLIG), 263–283 (LPWG…TIIL), 294–314 (SCAV…CGYF), 385–405 (LGNG…MSVF), 426–446 (CCFF…LVAI), 447–467 (PSSV…ISGV), 481–501 (FILT…DWFS), and 522–542 (LVMA…NLIL).

Belongs to the nucleobase:cation symporter-2 (NCS2) (TC 2.A.40) family.

The protein localises to the membrane. Functionally, able to transport with low efficiency all natural purines as well as purine analogs. This is Purine permease (uapC) from Emericella nidulans (strain FGSC A4 / ATCC 38163 / CBS 112.46 / NRRL 194 / M139) (Aspergillus nidulans).